The chain runs to 304 residues: Secreted mono- and diacylglycerol lipase LIP1 (304 aa).

A signal peptide spans 1–19 (MLFSRFVLLAFGSVAAVSA). A glycan (O-linked (Man...) threonine) is linked at threonine 32. Residues cysteine 57 and cysteine 297 are joined by a disulfide bond. The active-site Nucleophile is the serine 171. Residue aspartate 228 is part of the active site. N-linked (GlcNAc...) asparagine glycosylation occurs at asparagine 253. The active site involves histidine 281.

Belongs to the AB hydrolase superfamily. Lipase family. Class 3 subfamily.

Its subcellular location is the secreted. It is found in the cell wall. The catalysed reaction is a monoacylglycerol + H2O = glycerol + a fatty acid + H(+). It catalyses the reaction a diacylglycerol + H2O = a monoacylglycerol + a fatty acid + H(+). RHC 80267, a well-known inhibitor of diacylglycerol lipases from mammals, also acts as an inhibitor for LIP1/SMG1. Its function is as follows. Secreted lipase involved in Dandruff and seborrheic dermatitis (D/SD) probably via lipase-mediated breakdown of sebaceous lipids and release of irritating free fatty acids. Shows activity against monoglyceride and diglyceride substrates, but not triglyceride substrates and does not exhibit regio-selective production of diacylglycerols. Able to hydrolyze diacylglycerols such as distearin, dilinolein, dipalmitoylglycerol and dipalmitolein. Cleaves oleic acid from 1,2 isomers of diolein on both the 1 and the 2 position of the glycerol backbone, resulting mainly in free fatty acids but no monoolein is detected. Shows activity on monoolein and liberates mostly free fatty acids, but can also perform the reverse reaction and produce diolein. This chain is Secreted mono- and diacylglycerol lipase LIP1, found in Malassezia globosa (strain ATCC MYA-4612 / CBS 7966) (Dandruff-associated fungus).